A 222-amino-acid polypeptide reads, in one-letter code: 7-cyano-7-deazaguanine synthase (222 aa).

Position 11 to 21 (11 to 21 (FSGGQDSTTCL)) interacts with ATP. Zn(2+) contacts are provided by C187, C195, C198, and C201.

This sequence belongs to the QueC family. Requires Zn(2+) as cofactor.

It catalyses the reaction 7-carboxy-7-deazaguanine + NH4(+) + ATP = 7-cyano-7-deazaguanine + ADP + phosphate + H2O + H(+). The protein operates within purine metabolism; 7-cyano-7-deazaguanine biosynthesis. Functionally, catalyzes the ATP-dependent conversion of 7-carboxy-7-deazaguanine (CDG) to 7-cyano-7-deazaguanine (preQ(0)). This Actinobacillus pleuropneumoniae serotype 7 (strain AP76) protein is 7-cyano-7-deazaguanine synthase.